We begin with the raw amino-acid sequence, 601 residues long: ATP-dependent RNA helicase DeaD (601 aa).

The short motif at 6–34 (STFSFLGLNPFIIKSLSKMGYVKPSPIQA) is the Q motif element. The region spanning 37–208 (IPLLLEGRDV…KRFMKNPQEI (172 aa)) is the Helicase ATP-binding domain. 50 to 57 (AQTGSGKT) is a binding site for ATP. The DEAD box signature appears at 156 to 159 (DEAD). The Helicase C-terminal domain maps to 231–378 (KTDALIRFLE…EVQLPKIEVL (148 aa)). Positions 564–581 (SIFNKDKNNKRRFSDNRL) are enriched in basic and acidic residues. Residues 564–601 (SIFNKDKNNKRRFSDNRLNKSSSIKNETKSSFFRRKSV) form a disordered region. A compositionally biased stretch (polar residues) spans 582–594 (NKSSSIKNETKSS).

It belongs to the DEAD box helicase family. DeaD/CsdA subfamily.

Its subcellular location is the cytoplasm. The catalysed reaction is ATP + H2O = ADP + phosphate + H(+). Functionally, DEAD-box RNA helicase involved in various cellular processes at low temperature, including ribosome biogenesis, mRNA degradation and translation initiation. The sequence is that of ATP-dependent RNA helicase DeaD from Buchnera aphidicola subsp. Schizaphis graminum (strain Sg).